Reading from the N-terminus, the 590-residue chain is Probable serine/threonine-protein phosphatase PP2A regulatory subunit (590 aa).

14 HEAT repeats span residues 37-73, 74-111, 113-150, 151-188, 189-227, 228-266, 267-305, 306-344, 349-387, 388-426, 427-465, 466-504, 505-543, and 544-582; these read LSTI…VLAE, QLGN…DKAV, SLRK…TSAC, GLFS…RAAA, AKLG…LLTV, ESAI…YMVA, EKLI…CAAT, QRLQ…QLVK, GVIM…LNII, SSLD…LAIV, QFMP…EAST, LIMK…MTCL, FCLN…FNAA, and KSLK…YFSE.

It belongs to the phosphatase 2A regulatory subunit A family. In terms of assembly, part of a complex consisting of a common heterodimeric core enzyme, composed of catalytic subunit let-92 and constant regulatory subunit paa-1, that associates with a variety of regulatory subunits which confer distinct properties to the holoenzyme. Interacts with rsa-1.

The protein resides in the cytoplasm. The protein localises to the cytoskeleton. It is found in the microtubule organizing center. Its subcellular location is the centrosome. It localises to the spindle. Its function is as follows. Acts as a scaffolding protein for phosphatase let-92 and its regulatory subunits. Probably together with let-92 and regulatory subunit sur-6, regulates centriole duplication, microtubule outgrowth and mitotic spindle stability during early embryonic cell division by preventing the degradation of sas-5 and kinase zyg-1. During vulva development, may play a role with phosphatase let-92 and regulatory subunit sur-6 in the induction of vulva cell precursors by positively regulating let-60/Ras-MAP kinase signaling, probably by promoting lin-45 activation. Plays a positive role in axon guidance probably by inhibiting phosphatase let-92. The polypeptide is Probable serine/threonine-protein phosphatase PP2A regulatory subunit (paa-1) (Caenorhabditis elegans).